The primary structure comprises 224 residues: Glutathione S-transferase Mu 5 (224 aa).

The GST N-terminal domain occupies 4–91 (KSMVLGYWDI…YIARKHNMCG (88 aa)). Position 5 is a phosphoserine (S5). Glutathione-binding positions include 10 to 11 (YW), 49 to 53 (WLDVK), 62 to 63 (NL), and 75 to 76 (QS). In terms of domain architecture, GST C-terminal spans 93–211 (TEEEKIRVDI…QSDRFFKMPI (119 aa)). Y119 provides a ligand contact to substrate.

Belongs to the GST superfamily. Mu family. Homodimer. Interacts with PFKM isoform 2 and isoform 3 (via N-terminal testis-specific region).

The protein resides in the cytoplasm. It carries out the reaction RX + glutathione = an S-substituted glutathione + a halide anion + H(+). In terms of biological role, conjugation of reduced glutathione to a wide number of exogenous and endogenous hydrophobic electrophiles. The chain is Glutathione S-transferase Mu 5 (Gstm5) from Mus musculus (Mouse).